Reading from the N-terminus, the 173-residue chain is Regulator of ribonuclease activity A (173 aa).

Belongs to the RraA family. In terms of assembly, homotrimer. Binds to both RNA-binding sites in the C-terminal region of Rne and to RhlB.

It is found in the cytoplasm. In terms of biological role, globally modulates RNA abundance by binding to RNase E (Rne) and regulating its endonucleolytic activity. Can modulate Rne action in a substrate-dependent manner by altering the composition of the degradosome. Modulates RNA-binding and helicase activities of the degradosome. This chain is Regulator of ribonuclease activity A, found in Vibrio vulnificus (strain CMCP6).